The following is a 425-amino-acid chain: Inositol hexakisphosphate kinase 2 (425 aa).

ATP is bound by residues 206–208 and aspartate 219; that span reads ENL. Substrate contacts are provided by residues 215 to 223, lysine 221, and 235 to 242; these read PCVLDLKMG and KAANQIRK. Position 382 (aspartate 382) interacts with ATP. Residue histidine 385 participates in substrate binding.

This sequence belongs to the inositol phosphokinase (IPK) family. As to expression, highly expressed in small intestine.

Its subcellular location is the nucleus. The enzyme catalyses 1D-myo-inositol hexakisphosphate + ATP = 5-diphospho-1D-myo-inositol 1,2,3,4,6-pentakisphosphate + ADP. It participates in phospholipid metabolism; phosphatidylinositol metabolism. Its function is as follows. Converts inositol hexakisphosphate (InsP6) to diphosphoinositol pentakisphosphate (InsP7/PP-InsP5). In Rattus norvegicus (Rat), this protein is Inositol hexakisphosphate kinase 2 (Ip6k2).